The sequence spans 5085 residues: Protein piccolo (5085 aa).

The span at 1-20 (MGNEASLEGEGLPEGLAAAA) shows a compositional bias: low complexity. Disordered regions lie at residues 1–142 (MGNE…DFKE) and 173–516 (DLIS…TPAQ). Residues 92-101 (PGKPPDPGRP) are compositionally biased toward pro residues. 3 stretches are compositionally biased toward basic and acidic residues: residues 110 to 121 (RTTDTFRSEQKL), 132 to 142 (KESKSRTDFKE), and 184 to 198 (ETTK…EQGK). 2 positions are modified to phosphoserine: serine 211 and serine 231. Over residues 227–240 (QQDSSPKSVSSQQA) the composition is skewed to polar residues. A compositionally biased stretch (low complexity) spans 253 to 268 (PSQQSPAQTPAQQASP). Polar residues-rich tracts occupy residues 275–285 (QPGSAKATVQQ), 318–332 (KTSS…SLAQ), and 375–391 (TPAQ…QQPG). Residues 372–491 (PTKTPAQQSG…LAKPSAQQPT (120 aa)) form a 12 X 10 AA tandem approximate repeats of P-A-K-P-Q-P-Q-Q-P-X region. Over residues 392 to 408 (PTKPSPQQPIPAKPQPQ) the composition is skewed to pro residues. Residues 409–423 (QPVATKTQPQQSAPA) show a composition bias toward low complexity. The segment covering 424–472 (KPQPQQPAPAKPQPQQPTPAKPQPQPPTPAKPQPQPPTATKPQPQPPTA) has biased composition (pro residues). The span at 486-499 (SAQQPTKSISQTVT) shows a compositional bias: polar residues. The C4-type zinc-finger motif lies at 523-547 (CPLCNTTELLLHIPEKANFNTCTEC). Disordered regions lie at residues 586–880 (AAIP…TVTG), 896–1012 (LIST…ACPL), 1069–1357 (QLGD…PSDL), 1373–1604 (STLV…EELV), and 1622–1815 (TIAD…SDPE). Low complexity predominate over residues 596–613 (PKAATAPTATASKSPVPS). Over residues 618–654 (PKKEPPSKQDSPKALESKKPPEPKKPPEPKKPPEPKK) the composition is skewed to basic and acidic residues. Over residues 672–682 (APQLPVAEALP) the composition is skewed to low complexity. Positions 683–693 (EPAPPKEPSGP) are enriched in pro residues. Over residues 705–717 (VEPKQPKMTETRA) the composition is skewed to basic and acidic residues. Polar residues predominate over residues 718–767 (DIQSSSTTKPDILSSQVQSQAQVKTASPLKTDSAKPSQSFPPTGEKTTPL). Basic and acidic residues predominate over residues 790–808 (ESKDPKHIDPIQKKDEPKK). A phosphoserine mark is found at serine 857 and serine 869. Polar residues-rich tracts occupy residues 867–878 (PKSQPTTPQETV), 896–906 (LISTAGQQGPH), and 917–936 (QAPT…STGQ). At threonine 873 the chain carries Phosphothreonine. Residues 990–1004 (EPEKAVPAHKPDKTT) show a composition bias toward basic and acidic residues. The C4-type zinc finger occupies 1010–1033 (CPLCRTELNLGSQEPPNFNTCTEC). Pro residues predominate over residues 1077–1092 (PPAPSGPKASPMPAPA). Basic and acidic residues predominate over residues 1110–1129 (KEAEGKTEAEKPVPEKETAS). Threonine 1133 is modified (phosphothreonine). 3 stretches are compositionally biased toward basic and acidic residues: residues 1141–1150 (QKLEESEGKK), 1157–1199 (PEKK…KLPP), and 1274–1295 (SSKD…DKSD). The span at 1300–1318 (QQPKSPQGLSDTGYSSDGI) shows a compositional bias: polar residues. 8 positions are modified to phosphoserine: serine 1304, serine 1314, serine 1315, serine 1344, serine 1346, serine 1349, serine 1350, and serine 1353. Over residues 1331–1345 (SDEKDLLKGLKKDSF) the composition is skewed to basic and acidic residues. The segment covering 1346 to 1355 (SQESSPSSPS) has biased composition (low complexity). Residues 1378–1396 (EKAEKKTQPQKISPEKPQD) show a composition bias toward basic and acidic residues. The segment covering 1397–1407 (QQKTQTASETL) has biased composition (polar residues). Residues 1417-1456 (KESQEKKVSPKKDSEQGFPSRKEHKEKPELVDDLSPRRAS) are compositionally biased toward basic and acidic residues. Phosphoserine occurs at positions 1451, 1463, 1464, 1466, 1469, 1493, 1496, 1517, and 1519. Over residues 1511–1523 (SADEDASGSEDEE) the composition is skewed to acidic residues. Threonine 1564 carries the phosphothreonine modification. Serine 1565, serine 1575, and serine 1587 each carry phosphoserine. Residues 1578 to 1587 (DEDDETFDES) are compositionally biased toward acidic residues. Over residues 1588–1599 (PELKFRETKSQE) the composition is skewed to basic and acidic residues. The span at 1622–1635 (TIADKYSSESSQKK) shows a compositional bias: polar residues. Positions 1640–1650 (FDEEPELEMES) are enriched in acidic residues. Phosphoserine is present on serine 1650. Threonine 1652 is subject to Phosphothreonine. A phosphoserine mark is found at serine 1654 and serine 1659. A compositionally biased stretch (polar residues) spans 1662 to 1679 (EGSSSLHASSFTPGTSPT). The segment covering 1719-1732 (DSSEEEELREEEEL) has biased composition (acidic residues). A phosphoserine mark is found at serine 1720 and serine 1721. The span at 1733–1746 (LKEQEKQRELEQQQ) shows a compositional bias: basic and acidic residues. Threonine 1772 is subject to Phosphothreonine. Serine 1778 is subject to Phosphoserine. Positions 1787–1802 (EELRQAAEMEELHRSS) are enriched in basic and acidic residues. Phosphoserine is present on residues serine 1807, serine 1812, serine 1820, and serine 1841. Disordered stretches follow at residues 2116-2139 (PSES…SSVC), 2275-2385 (ELTK…PTYP), and 2456-2486 (KPPI…TGLS). A compositionally biased stretch (low complexity) spans 2121–2139 (TSVPPSDTPSLTSSISSVC). A compositionally biased stretch (pro residues) spans 2350–2384 (QPPPPPPPPPPSPSTSSPPPTPPLPPATSPKPPTY). Phosphoserine is present on serine 2511. Threonine 2702 carries O-linked (GlcNAc) threonine glycosylation. O-linked (GlcNAc) serine glycosylation occurs at serine 2976. Threonine 3014 is subject to Phosphothreonine. Disordered stretches follow at residues 3350–3457 (KEEK…PLSK) and 3503–3572 (KTYK…LYSP). The residue at position 3374 (serine 3374) is a Phosphoserine. A compositionally biased stretch (basic and acidic residues) spans 3377-3386 (DDPRNLKKIV). Serine 3388 carries the post-translational modification Phosphoserine. A phosphothreonine mark is found at threonine 3392 and threonine 3419. Over residues 3419-3428 (TDDEDQDEWD) the composition is skewed to acidic residues. A compositionally biased stretch (polar residues) spans 3511-3523 (GCQTETDSDTQSP). Phosphoserine occurs at positions 3522, 3530, 3561, 3565, 3571, 3574, 3577, 3598, 3624, 3626, and 3632. 2 disordered regions span residues 3602 to 3695 (VLHP…ASRR) and 3774 to 3816 (AEDR…FIPP). Polar residues-rich tracts occupy residues 3647–3663 (EGFT…SGTQ) and 3679–3691 (STGT…TMGT). Position 3781 is a phosphoserine (serine 3781). Positions 3791–3803 (SRVESQHGVERPR) are enriched in basic and acidic residues. A compositionally biased stretch (polar residues) spans 3805–3816 (APQTEFSQFIPP). A phosphoserine mark is found at serine 4034 and serine 4150. Disordered regions lie at residues 4225–4248 (ADKP…YGLD) and 4272–4291 (VSFG…LPIS). Residues 4228–4248 (PYSSGSRSRPSSRPSSVYGLD) are compositionally biased toward low complexity. Residues 4275–4291 (GHSSSSARTKPTSLPIS) are compositionally biased toward polar residues. Phosphoserine is present on residues serine 4304, serine 4308, serine 4311, serine 4340, and serine 4376. A disordered region spans residues 4335–4357 (RDQFGSSHSLPEVQQHMREESRT). In terms of domain architecture, PDZ spans 4442–4536 (RVKITRDFKD…EAEICVRLDL (95 aa)). Positions 4589-4638 (VEKGSHAHSGPTSAGSSSVPSPGQPGSPSVSKKKHSSTKPTDGPKAASHP) are disordered. A compositionally biased stretch (low complexity) spans 4595-4618 (AHSGPTSAGSSSVPSPGQPGSPSV). Serine 4609 carries the phosphoserine modification. The 130-residue stretch at 4639-4768 (ITGEIQLQIN…SHLDNTPRWY (130 aa)) folds into the C2 1 domain. The Ca(2+) site is built by aspartate 4668 and aspartate 4674. Residue serine 4723 is modified to Phosphoserine. Aspartate 4738, aspartate 4740, serine 4743, and aspartate 4746 together coordinate Ca(2+). Disordered stretches follow at residues 4775–4851 (ESID…SVAQ) and 4874–4908 (QPTK…SEGS). 2 stretches are compositionally biased toward low complexity: residues 4783–4795 (HSSQ…PKPS) and 4822–4832 (SSPGSSKSSSE). Residues 4840–4851 (PSRSQSKTSVAQ) show a composition bias toward polar residues. Low complexity predominate over residues 4886–4908 (SSVSTGSSGSSVGSGYSVDSEGS). The 126-residue stretch at 4950–5075 (VMGEIKLALK…DLRKRIVNWH (126 aa)) folds into the C2 2 domain.

In terms of assembly, interacts with BSN, ERC2/CAST1, RIMS1 and UNC13A. Interacts (via C-terminus) with TRIO (via N-terminus). Interacts with CTBP1. Interacts with SIAH1; this interaction negatively regulates SIAH1 E3 ligase activity. Directly interacts with GIT1 and GIT2. The cofactor is Ca(2+). Expressed in brain (at protein level).

It localises to the presynaptic active zone. Scaffold protein of the presynaptic cytomatrix at the active zone (CAZ) which is the place in the synapse where neurotransmitter is released. After synthesis, participates in the formation of Golgi-derived membranous organelles termed Piccolo-Bassoon transport vesicles (PTVs) that are transported along axons to sites of nascent synaptic contacts. At the presynaptic active zone, regulates the spatial organization of synaptic vesicle cluster, the protein complexes that execute membrane fusion and compensatory endocytosis. Organizes as well the readily releasable pool of synaptic vesicles and safeguards a fraction of them to be not immediately available for action potential-induced release. Also functions in processes other than assembly such as the regulation of specific presynaptic protein ubiquitination by interacting with SIAH1 or the regulation of presynaptic autophagy. Also mediates synapse to nucleus communication leading to reconfiguration of gene expression by associating with the transcriptional corepressor CTBP1 and by subsequently reducing the size of its pool available for nuclear import. In Rattus norvegicus (Rat), this protein is Protein piccolo (Pclo).